A 568-amino-acid polypeptide reads, in one-letter code: Urease subunit alpha (568 aa).

Positions 130-568 (GGIDTHIHFI…LPMAQRYFLF (439 aa)) constitute a Urease domain. His-135, His-137, and Lys-218 together coordinate Ni(2+). The residue at position 218 (Lys-218) is an N6-carboxylysine. Residue His-220 coordinates substrate. Residues His-247 and His-273 each coordinate Ni(2+). Catalysis depends on His-321, which acts as the Proton donor. Residue Asp-361 coordinates Ni(2+).

It belongs to the metallo-dependent hydrolases superfamily. Urease alpha subunit family. In terms of assembly, heterotrimer of UreA (gamma), UreB (beta) and UreC (alpha) subunits. Three heterotrimers associate to form the active enzyme. Requires Ni cation as cofactor. Carboxylation allows a single lysine to coordinate two nickel ions.

The protein resides in the cytoplasm. It catalyses the reaction urea + 2 H2O + H(+) = hydrogencarbonate + 2 NH4(+). It functions in the pathway nitrogen metabolism; urea degradation; CO(2) and NH(3) from urea (urease route): step 1/1. This Burkholderia pseudomallei (strain 668) protein is Urease subunit alpha.